The following is a 420-amino-acid chain: Probable 3-isopropylmalate dehydratase large subunit (420 aa).

Residues Cys-301, Cys-361, and Cys-364 each contribute to the [4Fe-4S] cluster site.

Belongs to the aconitase/IPM isomerase family. LeuC type 2 subfamily. Heterodimer of LeuC and LeuD. The cofactor is [4Fe-4S] cluster.

It catalyses the reaction (2R,3S)-3-isopropylmalate = (2S)-2-isopropylmalate. The protein operates within amino-acid biosynthesis; L-leucine biosynthesis; L-leucine from 3-methyl-2-oxobutanoate: step 2/4. Functionally, catalyzes the isomerization between 2-isopropylmalate and 3-isopropylmalate, via the formation of 2-isopropylmaleate. The polypeptide is Probable 3-isopropylmalate dehydratase large subunit (Methanosarcina mazei (strain ATCC BAA-159 / DSM 3647 / Goe1 / Go1 / JCM 11833 / OCM 88) (Methanosarcina frisia)).